The primary structure comprises 392 residues: Formate-dependent phosphoribosylglycinamide formyltransferase (392 aa).

N(1)-(5-phospho-beta-D-ribosyl)glycinamide contacts are provided by residues Glu22 to Leu23 and Glu82. ATP is bound by residues Arg114, Lys155, Ser160–Gln165, Glu195–Val198, and Glu203. The ATP-grasp domain occupies Arg119–Leu308. The Mg(2+) site is built by Glu267 and Glu279. N(1)-(5-phospho-beta-D-ribosyl)glycinamide-binding positions include Asp286, Lys355, and Arg362–Arg363.

It belongs to the PurK/PurT family. As to quaternary structure, homodimer.

The catalysed reaction is N(1)-(5-phospho-beta-D-ribosyl)glycinamide + formate + ATP = N(2)-formyl-N(1)-(5-phospho-beta-D-ribosyl)glycinamide + ADP + phosphate + H(+). The protein operates within purine metabolism; IMP biosynthesis via de novo pathway; N(2)-formyl-N(1)-(5-phospho-D-ribosyl)glycinamide from N(1)-(5-phospho-D-ribosyl)glycinamide (formate route): step 1/1. Involved in the de novo purine biosynthesis. Catalyzes the transfer of formate to 5-phospho-ribosyl-glycinamide (GAR), producing 5-phospho-ribosyl-N-formylglycinamide (FGAR). Formate is provided by PurU via hydrolysis of 10-formyl-tetrahydrofolate. The sequence is that of Formate-dependent phosphoribosylglycinamide formyltransferase from Salmonella schwarzengrund (strain CVM19633).